The primary structure comprises 541 residues: DEAD-box ATP-dependent RNA helicase 57 (541 aa).

Residues 43-52 show a composition bias toward acidic residues; that stretch reads VEEEEDTEQP. The tract at residues 43–72 is disordered; it reads VEEEEDTEQPEAEKVIVSSKKRKRRSSNSV. The Q motif signature appears at 141-169; that stretch reads ELSSRYGCEGYILRNLAELGFKEPTPIQR. Residues 172-342 enclose the Helicase ATP-binding domain; the sequence is IPILLSGREC…RSIMHDAVRV (171 aa). An ATP-binding site is contributed by 185–192; it reads APTGSGKT. The short motif at 289–292 is the DEAD box element; that stretch reads DESD. In terms of domain architecture, Helicase C-terminal spans 370–514; it reads ALRQSFAESL…EVPSWIMSLK (145 aa). The segment at 517-541 is disordered; that stretch reads KWRKHRPRRDSISTKPKADKNDTDE. The span at 525–541 shows a compositional bias: basic and acidic residues; the sequence is RDSISTKPKADKNDTDE.

Belongs to the DEAD box helicase family. DDX52/ROK1 subfamily.

It carries out the reaction ATP + H2O = ADP + phosphate + H(+). The protein is DEAD-box ATP-dependent RNA helicase 57 (RH57) of Arabidopsis thaliana (Mouse-ear cress).